The following is a 517-amino-acid chain: MANDQNKDYDKIIVLDYGSQYNQLITRRIREFGIYSELKPHTITAAEVKKIAPKGIIFSGGPNSVYDEGALGVDEDLFKLGIPILGVCYGMQLMAQRLGGDVEPADNREYGKADIEVTDDSAKLFRDLPKDQTVWMSHGDLVTRVPEGFRRTATSINCPISAMDDDDRKFYGIQFHAEVQNTQYGHEILHHFAFDICKAEANWSMDDFITKQIDKIRAEVGDKRVLLGLSGGVDSSVVGVLLHKAIGTQLTSIFVDHGLLRKGEADQVMESLKGKFGLNIIKVNAKDRFLGDLKGVTDPEKKRKIIGRDFIEVFNEEAAKLNGIDFLAQGTLYTDVVESGTDTAQTIKSHHNVGGLPEDLKFKLIEPLNKLFKDEVRELGEKLGMPHALVWRQPFPGPGLGIRVIGEVTEDKLEIVRDSDYILREEIAKHGLDKDIWQYFTVLPGFRSVGVMGDGRTYDYTIGIRAITSIDGMTADFARINWDVLQEISSRIVNEVKNVNRVVYDITSKPPATIEWE.

Residues 11 to 202 (KIIVLDYGSQ…AFDICKAEAN (192 aa)) form the Glutamine amidotransferase type-1 domain. C88 serves as the catalytic Nucleophile. Catalysis depends on residues H176 and E178. A GMPS ATP-PPase domain is found at 203–392 (WSMDDFITKQ…LGMPHALVWR (190 aa)). Residue 230–236 (SGGVDSS) participates in ATP binding.

Homodimer.

The catalysed reaction is XMP + L-glutamine + ATP + H2O = GMP + L-glutamate + AMP + diphosphate + 2 H(+). Its pathway is purine metabolism; GMP biosynthesis; GMP from XMP (L-Gln route): step 1/1. In terms of biological role, catalyzes the synthesis of GMP from XMP. The sequence is that of GMP synthase [glutamine-hydrolyzing] from Lacticaseibacillus casei (strain BL23) (Lactobacillus casei).